The primary structure comprises 512 residues: 2,3-bisphosphoglycerate-independent phosphoglycerate mutase (512 aa).

Residues Asp-12 and Ser-62 each coordinate Mn(2+). The active-site Phosphoserine intermediate is Ser-62. Residues His-123, 154–155 (RD), Arg-181, Arg-187, 253–256 (RPDR), and Lys-336 contribute to the substrate site. Mn(2+)-binding residues include Asp-403, His-407, Asp-444, His-445, and His-462.

It belongs to the BPG-independent phosphoglycerate mutase family. Monomer. Mn(2+) is required as a cofactor.

The enzyme catalyses (2R)-2-phosphoglycerate = (2R)-3-phosphoglycerate. It functions in the pathway carbohydrate degradation; glycolysis; pyruvate from D-glyceraldehyde 3-phosphate: step 3/5. In terms of biological role, catalyzes the interconversion of 2-phosphoglycerate and 3-phosphoglycerate. This chain is 2,3-bisphosphoglycerate-independent phosphoglycerate mutase, found in Aster yellows witches'-broom phytoplasma (strain AYWB).